The chain runs to 877 residues: Leucine--tRNA ligase (877 aa).

Residues 43–53 carry the 'HIGH' region motif; sequence PYPSGRIHMGH. A 'KMSKS' region motif is present at residues 628-632; that stretch reads KMSKS. Lysine 631 is a binding site for ATP.

This sequence belongs to the class-I aminoacyl-tRNA synthetase family.

It localises to the cytoplasm. The enzyme catalyses tRNA(Leu) + L-leucine + ATP = L-leucyl-tRNA(Leu) + AMP + diphosphate. The chain is Leucine--tRNA ligase from Brucella abortus (strain S19).